Reading from the N-terminus, the 469-residue chain is Mitochondrial adenyl nucleotide antiporter SLC25A25 (469 aa).

Positions 1–165 are regulatory N-terminal domain; the sequence is MLCLCLYVPI…LYWKHSTIFD (165 aa). The Mitochondrial intermembrane segment spans residues 1–189; sequence MLCLCLYVPI…ERQTGMWWRH (189 aa). EF-hand domains lie at 47-80, 78-113, and 114-149; these read TYRQ…QDHE, DHEK…LGVK, and ISEQ…HPVE. Positions 60, 62, 64, 66, and 71 each coordinate Ca(2+). The interval 151–160 is linker region; the sequence is IPEIILYWKH. Residues 166-469 are C-terminal transmembrane transporter domain; it reads VGENLTVPDE…LKITLGVQSR (304 aa). Solcar repeat units follow at residues 184-270, 278-363, and 375-463; these read GMWW…MKRL, LRIH…LKNT, and PGVF…LKIT. A helical transmembrane segment spans residues 190 to 207; the sequence is LVAGGGAGAVSRTCTAPL. The Mitochondrial matrix segment spans residues 208–244; sequence DRLKVLMQVHASRSNNMCIIGGFTQMIREGGAKSLWR. The helical transmembrane segment at 245–264 threads the bilayer; that stretch reads GNGINVLKIAPESAIKFMAY. Residues 265-287 are Mitochondrial intermembrane-facing; sequence EQMKRLVGSDQETLRIHERLVAG. The chain crosses the membrane as a helical span at residues 288–301; sequence SLAGAIAQSSIYPM. Residues 302 to 337 lie on the Mitochondrial matrix side of the membrane; it reads EVLKTRMALRKTGQYSGMLDCAKRILAKEGVAAFYK. A helical membrane pass occupies residues 338–357; the sequence is GYIPNMLGIIPYAGIDLAVY. Over 358-380 the chain is Mitochondrial intermembrane; it reads ETLKNTWLQRYAVNSADPGVFVL. A helical transmembrane segment spans residues 381–398; sequence LACGTISSTCGQLASYPL. Residues 399-437 lie on the Mitochondrial matrix side of the membrane; it reads ALVRTRMQAQASIEGAPEVTMSSLFKQILRTEGAFGLYR. The chain crosses the membrane as a helical span at residues 438–457; the sequence is GLAPNFMKVIPAVSISYVVY. The Mitochondrial intermembrane portion of the chain corresponds to 458–469; that stretch reads ENLKITLGVQSR.

This sequence belongs to the mitochondrial carrier (TC 2.A.29) family. Mainly present in the liver and the skeletal muscle (at protein level).

It localises to the mitochondrion inner membrane. It catalyses the reaction Mg(2+)(out) + phosphate(in) + ATP(out) = Mg(2+)(in) + phosphate(out) + ATP(in). With respect to regulation, activated by an increase in cytosolic calcium levels that induce a conformational change of the N-terminal regulatory domain, uncapping the channel and allowing transport. Its function is as follows. Electroneutral antiporter that most probably mediates the transport of adenyl nucleotides through the inner mitochondrial membrane. Originally identified as an ATP-magnesium/inorganic phosphate antiporter, it could have a broader specificity for adenyl nucleotides. By regulating the mitochondrial matrix adenyl nucleotide pool could adapt to changing cellular energetic demands and indirectly regulate adenyl nucleotide-dependent metabolic pathways. This is Mitochondrial adenyl nucleotide antiporter SLC25A25 from Rattus norvegicus (Rat).